We begin with the raw amino-acid sequence, 200 residues long: MSFSPLIRQLIDGLRILPGVGQKTAQRMALQLLERDRSGGLRLAQALTQAMEGVGHCRQCRTLTEQELCPQCADTRRDDTQLCVVEGPTDVYAVEQTGYRGRYFVLKGHLSPLDGLGPEAIGIPQLMARIEEQGTFTEVILATNPTVEGEATAHYIAQLLSEKGLAATRIAHGVPLGGELELVDGGTLAHAIAGRRPISL.

The C4-type zinc-finger motif lies at 57-72 (CRQCRTLTEQELCPQC). The 96-residue stretch at 80–175 (TQLCVVEGPT…AATRIAHGVP (96 aa)) folds into the Toprim domain.

This sequence belongs to the RecR family.

Its function is as follows. May play a role in DNA repair. It seems to be involved in an RecBC-independent recombinational process of DNA repair. It may act with RecF and RecO. The protein is Recombination protein RecR of Pseudomonas putida (strain GB-1).